A 203-amino-acid polypeptide reads, in one-letter code: MFSVGLTGGIGSGKTTVADLFGKLGATIVDTDLIAHRITAPQGLAMPLIAREFGAEFVAADGSLDRAKMRALVFSDESARKRLEAITHPLIREETEREARTAQGAYVVFVVPLLVESGTWKTRVDRVLVVDCDVETQIARVTARNGFTRAQVEAIVARQASRDARLAAADDVIANDNASVAELAAEVAALHQRYLECAAAARN.

Residues 3-201 enclose the DPCK domain; it reads SVGLTGGIGS…QRYLECAAAA (199 aa). 11 to 16 is a binding site for ATP; the sequence is GSGKTT.

It belongs to the CoaE family.

It is found in the cytoplasm. It catalyses the reaction 3'-dephospho-CoA + ATP = ADP + CoA + H(+). The protein operates within cofactor biosynthesis; coenzyme A biosynthesis; CoA from (R)-pantothenate: step 5/5. In terms of biological role, catalyzes the phosphorylation of the 3'-hydroxyl group of dephosphocoenzyme A to form coenzyme A. The sequence is that of Dephospho-CoA kinase from Burkholderia pseudomallei (strain 1710b).